The sequence spans 229 residues: Large ribosomal subunit protein uL1 (229 aa).

Belongs to the universal ribosomal protein uL1 family. In terms of assembly, part of the 50S ribosomal subunit.

In terms of biological role, binds directly to 23S rRNA. The L1 stalk is quite mobile in the ribosome, and is involved in E site tRNA release. Protein L1 is also a translational repressor protein, it controls the translation of the L11 operon by binding to its mRNA. The protein is Large ribosomal subunit protein uL1 of Flavobacterium psychrophilum (strain ATCC 49511 / DSM 21280 / CIP 103535 / JIP02/86).